Here is a 169-residue protein sequence, read N- to C-terminus: Phosphopantetheine adenylyltransferase (169 aa).

Substrate is bound at residue Ser10. ATP-binding positions include 10–11 (SF) and His18. Lys42, Thr79, and Arg93 together coordinate substrate. ATP is bound by residues 94 to 96 (GLR), Glu104, and 129 to 135 (VRPITAT).

It belongs to the bacterial CoaD family. In terms of assembly, homohexamer. The cofactor is Mg(2+).

It localises to the cytoplasm. The enzyme catalyses (R)-4'-phosphopantetheine + ATP + H(+) = 3'-dephospho-CoA + diphosphate. It participates in cofactor biosynthesis; coenzyme A biosynthesis; CoA from (R)-pantothenate: step 4/5. Reversibly transfers an adenylyl group from ATP to 4'-phosphopantetheine, yielding dephospho-CoA (dPCoA) and pyrophosphate. This chain is Phosphopantetheine adenylyltransferase, found in Rhodopseudomonas palustris (strain TIE-1).